Consider the following 1403-residue polypeptide: Sushi, nidogen and EGF-like domain-containing protein 1 (1403 aa).

An N-terminal signal peptide occupies residues 1–24; it reads MRRGAAWALLLAAALGLGARGVRA. The region spanning 103–258 is the NIDO domain; the sequence is AFWADVDNRR…GRWAFRIDDA (156 aa). 3 EGF-like domains span residues 268 to 309, 311 to 347, and 349 to 385; these read TTSV…RRCH, DVNECASHPCQNGGTCTHGVNSFSCQCPAGFQGPTCE, and AQSPCDNKVCQNGGQCQAESSSAVCVCQAGYTGATCE. Intrachain disulfides connect Cys-272–Cys-284, Cys-278–Cys-297, Cys-299–Cys-308, Cys-315–Cys-326, Cys-320–Cys-335, Cys-337–Cys-346, Cys-353–Cys-364, Cys-358–Cys-373, Cys-375–Cys-384, Cys-391–Cys-402, Cys-396–Cys-411, Cys-413–Cys-422, Cys-433–Cys-444, Cys-438–Cys-453, Cys-455–Cys-464, Cys-472–Cys-480, Cys-474–Cys-488, and Cys-490–Cys-499. Asn-292 carries N-linked (GlcNAc...) asparagine glycosylation. The region spanning 387-423 is the EGF-like 4; calcium-binding domain; sequence DVDECSSDPCLNGGSCVDLVGNYSCICVEPFEGPQCE. Asn-408 carries N-linked (GlcNAc...) asparagine glycosylation. EGF-like domains follow at residues 429 to 465 and 468 to 500; these read VPSPCLSNPCLNGGTCVDADQGYVCECPEGFMGLDCR and ILNDCDCRNGGRCLGANTTICQCPPGFFGLLCE. N-linked (GlcNAc...) asparagine glycosylation occurs at Asn-484. The N-linked (GlcNAc...) asparagine glycan is linked to Asn-536. EGF-like domains are found at residues 541–577, 580–616, 619–655, and 657–693; these read LPSPCDSDPCFNGGSCDAHEDSYTCECPRGFHGRHCE, RPHLCSSGPCRNGGTCKETGDEYRCTCPYRFTGRHCE, KPDSCASGPCHNGGTCFHYIGKYKCDCPPGFSGRHCE, and APSPCFRSPCMNGGICEDLGTDFSCHCQPGYTGHRCQ. Cystine bridges form between Cys-545–Cys-556, Cys-550–Cys-565, Cys-567–Cys-576, Cys-584–Cys-595, Cys-589–Cys-604, Cys-606–Cys-615, Cys-623–Cys-634, Cys-628–Cys-643, Cys-645–Cys-654, Cys-661–Cys-672, Cys-666–Cys-681, Cys-683–Cys-692, Cys-698–Cys-739, Cys-724–Cys-751, Cys-757–Cys-768, Cys-762–Cys-777, Cys-779–Cys-788, Cys-795–Cys-806, Cys-800–Cys-815, Cys-817–Cys-826, Cys-833–Cys-844, Cys-838–Cys-853, Cys-855–Cys-864, Cys-871–Cys-882, Cys-876–Cys-891, and Cys-893–Cys-902. Residues 696–753 enclose the Sushi domain; sequence VDCGQPEEVKHATMRLNGTRMGSVALYTCDPGFSLSVLSHMRVCQPQGVWSQPPQCIE. Asn-712 is a glycosylation site (N-linked (GlcNAc...) asparagine). The 37-residue stretch at 753-789 folds into the EGF-like 11; calcium-binding domain; that stretch reads EVDECQSQPCLHKGSCQDLIAGYQCLCSPGYEGVHCE. The EGF-like 12; calcium-binding domain occupies 791-827; that stretch reads ETDECQAQPCRNGGSCRDLPGAFICQCPEGFVGTHCE. EGF-like domains are found at residues 829–865 and 867–903; these read EVDACASSPCQHGGRCEDGGGAYLCVCPEGFFGYNCE and VSDPCFSSPCGGRGYCLASNGSHSCTCKVGYTGKDCT. An N-linked (GlcNAc...) asparagine glycan is attached at Asn-886. 3 consecutive Fibronectin type-III domains span residues 908-1006, 1007-1105, and 1106-1200; these read PPTA…TRPR, PIED…TRPL, and PPAN…SPRD. 5 N-linked (GlcNAc...) asparagine glycosylation sites follow: Asn-977, Asn-1015, Asn-1109, Asn-1139, and Asn-1298. The segment at 1295 to 1314 is disordered; it reads LPKNNSKDTESTPGSCSEDT. The span at 1305–1314 shows a compositional bias: polar residues; that stretch reads STPGSCSEDT. The EGF-like 15 domain occupies 1306 to 1342; sequence TPGSCSEDTCQNGGTCVPGANAHSCDCRPGFKGRHCE. 3 disulfides stabilise this stretch: Cys-1310–Cys-1321, Cys-1315–Cys-1330, and Cys-1332–Cys-1341.

In terms of processing, phosphorylated on serine and threonine residues. N-glycosylated. As to expression, expressed in liver.

Its subcellular location is the secreted. The protein localises to the extracellular space. It localises to the extracellular matrix. The chain is Sushi, nidogen and EGF-like domain-containing protein 1 from Rattus norvegicus (Rat).